The primary structure comprises 59 residues: Beta-defensin 134 (59 aa).

The first 19 residues, 1-19, serve as a signal peptide directing secretion; it reads MKPLLVVFVFLFLWDPVLA. Cystine bridges form between C25–C51, C31–C45, and C35–C52.

It belongs to the beta-defensin family.

Its subcellular location is the secreted. Functionally, has antibacterial activity. The chain is Beta-defensin 134 (DEFB134) from Pan troglodytes (Chimpanzee).